Here is a 338-residue protein sequence, read N- to C-terminus: Glycerol-3-phosphate dehydrogenase [NAD(P)+] (338 aa).

NADPH-binding residues include Ser-12, Trp-13, Lys-34, and Lys-110. Sn-glycerol 3-phosphate-binding residues include Lys-110, Gly-141, and Ser-143. An NADPH-binding site is contributed by Ala-145. Sn-glycerol 3-phosphate is bound by residues Lys-196, Asp-249, Ser-259, Arg-260, and Asn-261. The active-site Proton acceptor is Lys-196. Residue Arg-260 participates in NADPH binding. Positions 284 and 286 each coordinate NADPH.

It belongs to the NAD-dependent glycerol-3-phosphate dehydrogenase family.

It localises to the cytoplasm. The catalysed reaction is sn-glycerol 3-phosphate + NAD(+) = dihydroxyacetone phosphate + NADH + H(+). It carries out the reaction sn-glycerol 3-phosphate + NADP(+) = dihydroxyacetone phosphate + NADPH + H(+). Its pathway is membrane lipid metabolism; glycerophospholipid metabolism. In terms of biological role, catalyzes the reduction of the glycolytic intermediate dihydroxyacetone phosphate (DHAP) to sn-glycerol 3-phosphate (G3P), the key precursor for phospholipid synthesis. The sequence is that of Glycerol-3-phosphate dehydrogenase [NAD(P)+] from Ligilactobacillus salivarius (strain UCC118) (Lactobacillus salivarius).